Consider the following 322-residue polypeptide: 3-hydroxyacyl-CoA dehydrogenase FVEG_12628 (322 aa).

The helical transmembrane segment at 5-25 (IRTVAIVGCGVIGMGWAVLFL) threads the bilayer. Residue Glu-151 is the For hydroxyacyl-coenzyme A dehydrogenase activity of the active site.

Belongs to the 3-hydroxyacyl-CoA dehydrogenase family.

The protein localises to the membrane. Its function is as follows. 3-hydroxyacyl-CoA dehydrogenase; part of the Fusarium detoxification of benzoxazolinone cluster 2 (FDB2) involved in the degradation of benzoxazolinones produced by the host plant. Maize, wheat, and rye produce the 2 benzoxazinone phytoanticipins 2,4-dihy-droxy-7-methoxy-1,4-benzoxazin-3-one (DIMBOA) and 2,4-dihydroxy-1,4-benzoxazin-3-one (DIBOA) that, due to their inherent instability once released, spontaneously degrade to the more stable corresponding benzoxazolinones, 6-methoxy-2-benzoxazolinone (MBOA) and 2-benzoxazolinone (BOA), respectively. The first step in the detoxification of benzoxazolinones involves the hydrolysis of the cyclic ester bond of benzoxazolinones by the FDB1 cluster gamma-lactamase MBL1 to aminophenols. MBL1 is able to convert BOA into 2-aminophenol (2-AP), as well as MBOA into 5-methoxy-2-aminophenol (2-AMP). The FDB2 cluster N-malonyltransferase FDB2/NAT1 then metabolizes aminophenols via N-malonylation to non-toxic malonamic acids. FDB2/NAT1 converts 2-AP into N-(2-hydroxyphenyl) malonamic acid (HPMA) and 2-AMP into N-(2-hydroxy-4-methoxyphenyl) malonamic acid (HMPMA). The duplicated dienlactone hydrolases DLH1 and DLH2 may provide redundant function for hydrolyzing the lactone moiety in the BOA molecule. The roles of the amidases an other enzymes encoded by the 2 FDB clusters have not been identified so far. The sequence is that of 3-hydroxyacyl-CoA dehydrogenase FVEG_12628 from Gibberella moniliformis (strain M3125 / FGSC 7600) (Maize ear and stalk rot fungus).